The chain runs to 347 residues: NADH-ubiquinone oxidoreductase chain 2 (347 aa).

The next 11 membrane-spanning stretches (helical) occupy residues Met1–Met21, His25–Met45, Tyr59–Thr79, Ile96–Pro116, Cys127–Pro147, Ile149–Gly169, Ile178–Pro198, Met200–Ile220, Ile237–Leu257, Ile276–Leu296, and Leu325–Leu345.

This sequence belongs to the complex I subunit 2 family. As to quaternary structure, core subunit of respiratory chain NADH dehydrogenase (Complex I) which is composed of 45 different subunits. Interacts with TMEM242.

Its subcellular location is the mitochondrion inner membrane. The enzyme catalyses a ubiquinone + NADH + 5 H(+)(in) = a ubiquinol + NAD(+) + 4 H(+)(out). Its function is as follows. Core subunit of the mitochondrial membrane respiratory chain NADH dehydrogenase (Complex I) which catalyzes electron transfer from NADH through the respiratory chain, using ubiquinone as an electron acceptor. Essential for the catalytic activity and assembly of complex I. In Natalus tumidirostris (Trinidadian funnel-eared bat), this protein is NADH-ubiquinone oxidoreductase chain 2.